We begin with the raw amino-acid sequence, 79 residues long: Small ribosomal subunit protein uS17 (79 aa).

Belongs to the universal ribosomal protein uS17 family. In terms of assembly, part of the 30S ribosomal subunit.

One of the primary rRNA binding proteins, it binds specifically to the 5'-end of 16S ribosomal RNA. The protein is Small ribosomal subunit protein uS17 of Orientia tsutsugamushi (strain Ikeda) (Rickettsia tsutsugamushi).